We begin with the raw amino-acid sequence, 1535 residues long: MEPGCNEFLPPPECPVFEPSWAEFQDPLGYIAKIRPIAEKSGICKIRPPADWQPPFAVEVDNFRFTPRIQRLNELEAQTRVKLNYLDQIAKFWEIQGSSLKIPNVERKILDLYSLSKIVIEEGGYEAICKDRRWARVAQRLHYPPGKNIGSLLRSHYERIIYPYEMFQSGANHVQCNTHPFDNEVKDKEYKPHSIPLRQSVQPSKFSSYSRRAKRLQPDPEPTEEDIEKNPELKKLQIYGPGPKMMGLGLMAKDKDKTVHKKVTCPPTVTVKDEQSGGGNVSSTLLKQHLSLEPCTKTTMQLRKNHSSAQFIDSYICQVCSRGDEDDKLLFCDGCDDNYHIFCLLPPLPEIPRGIWRCPKCILAECKQPPEAFGFEQATQEYTLQSFGEMADSFKSDYFNMPVHMVPTELLEKEFWRLVSSIEEDVTVEYGADIHYKEFGSGFPVSNSKQNLSPEEKEYATSGWNLNVMPVLAQSVLCHINADISGMKVPWLYVGMVFSAFCWHIEDHWSYSINYLHWGEPKTWYGVPSLAAEHLEEVMKMLTPELFDSQPDLLHQLVTLMNPNTLMSHGVPVVRTNQCAGEFVITFPRAYHSGFNQGYNFAEAVNFCTADWLPAGRQCIEHYRRLRRYCVFSHEELICKMAAFPETLDLNLAVAVHKEMFIMVQEERRLRKALLEKGVTEAEREAFELLPDDERQCIKCKTTCFLSALACYDCPDGLVCLSHINDLCKCSSSRQYLRYRYTLDELPTMLHKLKIRAESFDTWANKVRVALEVEDGRKRSFEELRALESEARERRFPNSELLQRLKNCLSEVEACIAQVLGLVSGQVARMDTPQLTLTELRVLLEQMGSLPCAMHQIGDVKDVLEQVEAYQDEAREALATLPSSPGLLRSLLERGQQLGVEVPEAHQLQQQVEQAQWLDEVKQALAPSAHRGSLVIMQGLLVMGAKIASSPSVDKARAELQELLTIAERWEEKAHFCLEARQKHPPATLEAIIRETENIPVHLPNIQALKEALTKAQAWIADVDEIQNGDHYPCLDDLEGLVAVGRDLPVGLEELRQLELQVLTAHSWREKASKTFLKKNSCYTLLEVLCPCADAGSDSTKRSRWMEKALGLYQCDTELLGLSAQDLRDPGSLIVAFKEGEQKEKEGILQLRRTNSAKPSPLAPSLMASSPTSICVCGQVPAGVGALQCDLCQDWFHGQCVSVPHLLTSPKPSLTSSPLLAWWEWDTKFLCPLCMRSRRPRLETILALLVALQRLPVRLPEGEALQCLTERAIGWQDRARKALASEDVTALLRHLAELRQQLQAKPRPVYTSATACDPIREGSGNNISKVQGLLENGDSVISPENMAPGKGSDLELLSSLLPQLTGPVLELPEAIRAPLEELMMEGDLLEVTLDENHSIWQLLQAGQPPDLDRIRTLLELEKFEHQGSRTRSRALERRRRQQKVDQGRNVENLVQQELQSKRARSSGIMSQVGREEEHYQEKADRENMFLTPSTDHSPSLKGNQNSLQHKDSGSSAACPSLMPWLQLSYSDEQQL.

One can recognise a JmjN domain in the interval 14-55 (CPVFEPSWAEFQDPLGYIAKIRPIAEKSGICKIRPPADWQPP). In terms of domain architecture, ARID spans 79-169 (TRVKLNYLDQ…IIYPYEMFQS (91 aa)). The tract at residues 192-227 (PHSIPLRQSVQPSKFSSYSRRAKRLQPDPEPTEEDI) is disordered. A compositionally biased stretch (polar residues) spans 197–210 (LRQSVQPSKFSSYS). Glycyl lysine isopeptide (Lys-Gly) (interchain with G-Cter in SUMO2) cross-links involve residues lysine 205, lysine 229, lysine 244, and lysine 272. A phosphoserine mark is found at serine 291 and serine 307. The segment at 314–364 (SYICQVCSRGDEDDKLLFCDGCDDNYHIFCLLPPLPEIPRGIWRCPKCILA) adopts a PHD-type 1 zinc-finger fold. Tyrosine 430 serves as a coordination point for 2-oxoglutarate. The region spanning 458–624 (EYATSGWNLN…AGRQCIEHYR (167 aa)) is the JmjC domain. 2 residues coordinate Fe cation: histidine 504 and glutamate 506. Serine 512, asparagine 514, and lysine 522 together coordinate 2-oxoglutarate. A Fe cation-binding site is contributed by histidine 592. The C5HC2 zinc finger occupies 697–749 (CIKCKTTCFLSALACYDCPDGLVCLSHINDLCKCSSSRQYLRYRYTLDELPTM). Position 884 is a phosphoserine (serine 884). The segment at 1174 to 1235 (ICVCGQVPAG…DTKFLCPLCM (62 aa)) adopts a PHD-type 2 zinc-finger fold. A Phosphoserine modification is found at serine 1342. The tract at residues 1425-1519 (HQGSRTRSRA…KDSGSSAACP (95 aa)) is disordered. The segment covering 1428-1441 (SRTRSRALERRRRQ) has biased composition (basic residues). The span at 1473-1487 (GREEEHYQEKADREN) shows a compositional bias: basic and acidic residues. The segment covering 1490–1517 (LTPSTDHSPSLKGNQNSLQHKDSGSSAA) has biased composition (polar residues).

Belongs to the JARID1 histone demethylase family. In terms of assembly, interacts withPCGF6, MSH5, ZMYND8, AR. The cofactor is L-ascorbate. Fe(2+) serves as cofactor.

It localises to the nucleus. It catalyses the reaction N(6),N(6),N(6)-trimethyl-L-lysyl(4)-[histone H3] + 3 2-oxoglutarate + 3 O2 = L-lysyl(4)-[histone H3] + 3 formaldehyde + 3 succinate + 3 CO2. In terms of biological role, histone demethylase that specifically demethylates 'Lys-4' of histone H3, thereby playing a central role in histone code. Does not demethylate histone H3 'Lys-9', H3 'Lys-27', H3 'Lys-36', H3 'Lys-79' or H4 'Lys-20'. Demethylates trimethylated and dimethylated but not monomethylated H3 'Lys-4'. May play a role in spermatogenesis. Involved in transcriptional repression of diverse metastasis-associated genes; in this function seems to cooperate with ZMYND8. Suppresses prostate cancer cell invasion. Regulates androgen receptor (AR) transcriptional activity by demethylating H3K4me3 active transcription marks. The sequence is that of Lysine-specific demethylase 5D (KDM5D) from Pan troglodytes (Chimpanzee).